Consider the following 182-residue polypeptide: Bifunctional protein PyrR (182 aa).

Residues 99-111 carry the PRPP-binding motif; it reads VILVDDVLYTGRT.

It belongs to the purine/pyrimidine phosphoribosyltransferase family. PyrR subfamily. Homodimer and homohexamer; in equilibrium.

It catalyses the reaction UMP + diphosphate = 5-phospho-alpha-D-ribose 1-diphosphate + uracil. Functionally, regulates transcriptional attenuation of the pyrimidine nucleotide (pyr) operon by binding in a uridine-dependent manner to specific sites on pyr mRNA. This disrupts an antiterminator hairpin in the RNA and favors formation of a downstream transcription terminator, leading to a reduced expression of downstream genes. Its function is as follows. Also displays a weak uracil phosphoribosyltransferase activity which is not physiologically significant. The protein is Bifunctional protein PyrR of Alkaliphilus metalliredigens (strain QYMF).